Here is a 680-residue protein sequence, read N- to C-terminus: MPDQSERATELRNLLNTAAHAYYVLDTPTMEDAVYDRLYQELLELEQNTPSLKTADSPTQRVGGAPAEGFTSVEHRIGLLSLDNAFNRDDLSAWNERLLRAIDRPLGSPLDLVSELKIDGNALALSYRNGVLERAATRGDGQRGEEITANVRTISAIPLRLRLDNPPEWVEIRGEAFIPDNTFAEINAERESRGEALFANPRNACAGTLRQLDPKVVAARRLDFFAYTLHLPTQEQPASQWDALTWLENAGFRVNPNRALCADLADINRFSDHWEQARHDLPYATDGVVVKLNNLVLQDEAGFTQKSPRWAIALKFPAEEAPSRLLRVVVQIGRTGVITPVAEFEPVALAGTSVSRATLHNADRIAELDLHLGDTIVVRKAGEIIPEVVRVLPELRPSSATPVQLPEHCPECGSNLVREGDEVATRCVNSSCPAILRGGLRHWVSKGALDVDGLGSKLIEQLVDQGLVRSIADLYRLDAALLGSLDRMGERSANNLIEALKLSRQRSWARQLYGLGIHHIGEVSAKAITAEFSDSNSLMEAACTAPERITAIYGIGTELAQSLQQWFSNPANQHLLDDLRSQGFRFALDDNDPGRLGAAASEQHLKGLTFVLTGTLPTLSRSEAKERIETCGGKVSGSVSKKTDYLVAGEEAGSKLTKATTLGIKILDEDRLQAMLKDSP.

NAD(+) contacts are provided by residues 32–36 (DAVYD), 81–82 (SL), and glutamate 115. Lysine 117 serves as the catalytic N6-AMP-lysine intermediate. The NAD(+) site is built by arginine 138, glutamate 175, lysine 291, and lysine 315. Zn(2+)-binding residues include cysteine 409, cysteine 412, cysteine 427, and cysteine 432. In terms of domain architecture, BRCT spans 600–680 (ASEQHLKGLT…RLQAMLKDSP (81 aa)).

The protein belongs to the NAD-dependent DNA ligase family. LigA subfamily. Requires Mg(2+) as cofactor. It depends on Mn(2+) as a cofactor.

It carries out the reaction NAD(+) + (deoxyribonucleotide)n-3'-hydroxyl + 5'-phospho-(deoxyribonucleotide)m = (deoxyribonucleotide)n+m + AMP + beta-nicotinamide D-nucleotide.. DNA ligase that catalyzes the formation of phosphodiester linkages between 5'-phosphoryl and 3'-hydroxyl groups in double-stranded DNA using NAD as a coenzyme and as the energy source for the reaction. It is essential for DNA replication and repair of damaged DNA. The polypeptide is DNA ligase (Synechococcus sp. (strain CC9902)).